The following is a 32-amino-acid chain: Fimbrin sef21 (32 aa).

The protein resides in the fimbrium. This chain is Fimbrin sef21, found in Salmonella enteritidis.